The primary structure comprises 558 residues: Putative transport protein VC0395_A0715/VC395_1212 (558 aa).

5 helical membrane-spanning segments follow: residues 5–25, 37–57, 66–86, 92–112, and 164–184; these read VVLL…AIGL, LGNS…GFSF, FMLF…GIFF, YLIL…FGGY, and VGYA…AKLL. RCK C-terminal domains lie at 203 to 290 and 291 to 374; these read RGLG…FRNG and KEVF…KIGF. 6 consecutive transmembrane segments (helical) span residues 384–404, 407–427, 441–461, 476–496, 504–524, and 537–557; these read LLAF…TMTF, VSFS…LGFL, ALNM…GLNA, VIGL…LVGA, ALLF…DVVN, and AGTY…FILL.

It belongs to the AAE transporter (TC 2.A.81) family. YbjL subfamily.

The protein localises to the cell membrane. The protein is Putative transport protein VC0395_A0715/VC395_1212 of Vibrio cholerae serotype O1 (strain ATCC 39541 / Classical Ogawa 395 / O395).